The chain runs to 262 residues: 5'-nucleotidase SurE (262 aa).

Residues aspartate 8, aspartate 9, serine 41, and asparagine 97 each coordinate a divalent metal cation.

Belongs to the SurE nucleotidase family. A divalent metal cation is required as a cofactor.

The protein localises to the cytoplasm. The catalysed reaction is a ribonucleoside 5'-phosphate + H2O = a ribonucleoside + phosphate. Its function is as follows. Nucleotidase that shows phosphatase activity on nucleoside 5'-monophosphates. This Methanococcus maripaludis (strain DSM 14266 / JCM 13030 / NBRC 101832 / S2 / LL) protein is 5'-nucleotidase SurE.